A 231-amino-acid polypeptide reads, in one-letter code: LexA repressor (231 aa).

Positions 28–48 form a DNA-binding region, H-T-H motif; sequence IREIGEALDIRSTNGVNDHLK. Active-site for autocatalytic cleavage activity residues include Ser149 and Lys186.

Belongs to the peptidase S24 family. Homodimer.

It carries out the reaction Hydrolysis of Ala-|-Gly bond in repressor LexA.. In terms of biological role, represses a number of genes involved in the response to DNA damage (SOS response), including recA and lexA. In the presence of single-stranded DNA, RecA interacts with LexA causing an autocatalytic cleavage which disrupts the DNA-binding part of LexA, leading to derepression of the SOS regulon and eventually DNA repair. In Anaeromyxobacter sp. (strain Fw109-5), this protein is LexA repressor.